We begin with the raw amino-acid sequence, 236 residues long: uncharacterized protein (236 aa).

Residues 1-23 (MRRILSILVFAIMLAGCSSNAST) form the signal peptide. A disordered region spans residues 22-62 (STEKQHAGGEKTVKAEPQSTSSQKDSTDDYQPNSQVTDDRT). Basic and acidic residues predominate over residues 24–35 (EKQHAGGEKTVK).

This is an uncharacterized protein from Bacillus subtilis (strain 168).